The chain runs to 75 residues: Dermaseptin-SP5 (75 aa).

The first 22 residues, 1 to 22 (MAFLKKSLFLVLFLGLVSLSMC), serve as a signal peptide directing secretion. A propeptide spanning residues 23–45 (EEEKRENEVEEEQEDDEQSELRR) is cleaved from the precursor. Residues 26-46 (KRENEVEEEQEDDEQSELRRS) form a disordered region. The span at 30 to 40 (EVEEEQEDDEQ) shows a compositional bias: acidic residues. P72 carries the post-translational modification Proline amide. Positions 74–75 (EQ) are excised as a propeptide.

It belongs to the frog skin active peptide (FSAP) family. Dermaseptin subfamily. In terms of tissue distribution, expressed by the skin glands.

It localises to the secreted. It is found in the target cell membrane. Its function is as follows. Antimicrobial peptide with weak activity against Gram-positive and Gram-negative bacteria and fungi. Has been tested against E.coli (MIC=96.06-256 uM), S.aureus (MIC&gt;192.12 uM), K.pneumoniae (MIC&gt;189.00 uM) and C.albicans (MIC=384.24-1024 uM). Probably acts by disturbing membrane functions with its alpha-helical amphipathic structure. May penetrate bacterial membranes, but stay at the mammalian membrane surface. Does not show hemolytic activity. Does not interact at all with cardiolipin. The protein is Dermaseptin-SP5 of Agalychnis spurrelli (Gliding leaf frog).